Here is a 271-residue protein sequence, read N- to C-terminus: Ribosomal RNA small subunit methyltransferase A (271 aa).

S-adenosyl-L-methionine contacts are provided by Asn28, Leu30, Gly54, Glu75, Asp99, and Asn117.

Belongs to the class I-like SAM-binding methyltransferase superfamily. rRNA adenine N(6)-methyltransferase family. RsmA subfamily.

It localises to the cytoplasm. It catalyses the reaction adenosine(1518)/adenosine(1519) in 16S rRNA + 4 S-adenosyl-L-methionine = N(6)-dimethyladenosine(1518)/N(6)-dimethyladenosine(1519) in 16S rRNA + 4 S-adenosyl-L-homocysteine + 4 H(+). In terms of biological role, specifically dimethylates two adjacent adenosines (A1518 and A1519) in the loop of a conserved hairpin near the 3'-end of 16S rRNA in the 30S particle. May play a critical role in biogenesis of 30S subunits. The chain is Ribosomal RNA small subunit methyltransferase A from Thermus thermophilus (strain ATCC BAA-163 / DSM 7039 / HB27).